Reading from the N-terminus, the 229-residue chain is Peptidase E (229 aa).

Active-site charge relay system residues include serine 120, aspartate 135, and histidine 157.

Belongs to the peptidase S51 family.

The protein resides in the cytoplasm. The catalysed reaction is Dipeptidase E catalyzes the hydrolysis of dipeptides Asp-|-Xaa. It does not act on peptides with N-terminal Glu, Asn or Gln, nor does it cleave isoaspartyl peptides.. Functionally, hydrolyzes dipeptides containing N-terminal aspartate residues. May play a role in allowing the cell to use peptide aspartate to spare carbon otherwise required for the synthesis of the aspartate family of amino acids. The polypeptide is Peptidase E (Salmonella paratyphi A (strain AKU_12601)).